The chain runs to 70 residues: Putative membrane protein insertion efficiency factor (70 aa).

Belongs to the UPF0161 family.

The protein localises to the cell membrane. Functionally, could be involved in insertion of integral membrane proteins into the membrane. This chain is Putative membrane protein insertion efficiency factor, found in Symbiobacterium thermophilum (strain DSM 24528 / JCM 14929 / IAM 14863 / T).